We begin with the raw amino-acid sequence, 349 residues long: tRNA (guanine(26)-N(2))-dimethyltransferase (349 aa).

Residues 1–343 (MEVEEGRARV…ADRDVVVKIL (343 aa)) enclose the Trm1 methyltransferase domain. S-adenosyl-L-methionine is bound by residues Arg-25, Arg-50, Asp-66, Asp-92, and Ala-93.

Belongs to the class I-like SAM-binding methyltransferase superfamily. Trm1 family.

The catalysed reaction is guanosine(26) in tRNA + 2 S-adenosyl-L-methionine = N(2)-dimethylguanosine(26) in tRNA + 2 S-adenosyl-L-homocysteine + 2 H(+). Its function is as follows. Dimethylates a single guanine residue at position 26 of a number of tRNAs using S-adenosyl-L-methionine as donor of the methyl groups. This Archaeoglobus fulgidus (strain ATCC 49558 / DSM 4304 / JCM 9628 / NBRC 100126 / VC-16) protein is tRNA (guanine(26)-N(2))-dimethyltransferase.